We begin with the raw amino-acid sequence, 1733 residues long: Gag-Pol polyprotein (1733 aa).

A lipid anchor (N-myristoyl glycine; by host) is attached at Gly2. Pro residues predominate over residues Leu108–Gln121. Disordered regions lie at residues Leu108–Gly218, Lys449–His469, and Trp511–Ile550. A PTAP/PSAP motif motif is present at residues Pro109 to Pro112. An LYPX(n)L motif motif is present at residues Leu128–Leu132. The PPXY motif motif lies at Pro161–Tyr164. Ser190 carries the phosphoserine; by host modification. Residues Glu436–Leu476 adopt a coiled-coil conformation. A compositionally biased stretch (basic and acidic residues) spans Lys449–Arg464. The segment at Asp500 to Lys517 adopts a CCHC-type zinc-finger fold. Positions Arg526 to Gly535 are enriched in low complexity. Residues Val559–Leu629 enclose the Peptidase A2 domain. The Protease; shared with dimeric partner role is filled by Asp564. RNA is bound by residues Tyr721, Asp771, Arg773, and Pro787. The 192-residue stretch at Leu739 to Leu930 folds into the Reverse transcriptase domain. Position 807 (Asp807) interacts with Mg(2+). The RNA site is built by Asn851 and Pro853. 2 residues coordinate Mg(2+): Asp881 and Asp882. Residues Arg941, Arg955, Arg958, and Phe966 each coordinate DNA. Residues Lys1054 and Lys1055 each coordinate RNA. Trp1063 provides a ligand contact to DNA. Lys1082 contacts RNA. Arg1113 serves as a coordination point for DNA. The region spanning Pro1172–Met1318 is the RNase H type-1 domain. A Mg(2+)-binding site is contributed by Asp1181. Positions 1184 and 1186 each coordinate RNA. Positions 1187, 1214, and 1216 each coordinate DNA. Positions 1219 and 1240 each coordinate Mg(2+). 2 residues coordinate RNA: Arg1242 and Arg1266. 3 residues coordinate Mg(2+): Asp1310, Asp1453, and Asp1512. Residues Arg1442–Pro1600 enclose the Integrase catalytic domain.

As to quaternary structure, homohexamer. Further associates as homomultimer. The virus core is composed of a lattice formed from hexagonal rings, each containing six capsid monomers. In terms of assembly, homodimer. The protease is a homodimer, whose active site consists of two apposed aspartic acid residues. The reverse transcriptase is a monomer. Requires Mg(2+) as cofactor. It depends on Mn(2+) as a cofactor. Post-translationally, specific enzymatic cleavages by the viral protease yield mature proteins. The protease is released by autocatalytic cleavage. The polyprotein is cleaved during and after budding, this process is termed maturation. Sumoylated. Required for virus replication. In terms of processing, phosphorylated on serine residues.

It is found in the host cell membrane. The protein resides in the virion. The enzyme catalyses DNA(n) + a 2'-deoxyribonucleoside 5'-triphosphate = DNA(n+1) + diphosphate. The catalysed reaction is Endonucleolytic cleavage to 5'-phosphomonoester.. Its function is as follows. Plays a role in budding and is processed by the viral protease during virion maturation outside the cell. During budding, it recruits, in a PPXY-dependent or independent manner, Nedd4-like ubiquitin ligases that conjugate ubiquitin molecules to Gag, or to Gag binding host factors. Interaction with HECT ubiquitin ligases probably link the viral protein to the host ESCRT pathway and facilitate release. Targets Gag and gag-pol polyproteins to the plasma membrane via a multipartite membrane binding signal, that includes its myristoylated N-terminus. Also mediates nuclear localization of the pre-integration complex. In terms of biological role, forms the spherical core of the virion that encapsulates the genomic RNA-nucleocapsid complex. Functionally, involved in the packaging and encapsidation of two copies of the genome. Binds with high affinity to conserved UCUG elements within the packaging signal, located near the 5'-end of the genome. This binding is dependent on genome dimerization. Its function is as follows. The aspartyl protease mediates proteolytic cleavages of Gag and Gag-Pol polyproteins during or shortly after the release of the virion from the plasma membrane. Cleavages take place as an ordered, step-wise cascade to yield mature proteins. This process is called maturation. Displays maximal activity during the budding process just prior to particle release from the cell. Multifunctional enzyme that converts the viral dimeric RNA genome into dsDNA in the cytoplasm, shortly after virus entry into the cell. This enzyme displays a DNA polymerase activity that can copy either DNA or RNA templates, and a ribonuclease H (RNase H) activity that cleaves the RNA strand of RNA-DNA heteroduplexes in a partially processive 3' to 5' endonucleasic mode. Conversion of viral genomic RNA into dsDNA requires many steps. A tRNA binds to the primer-binding site (PBS) situated at the 5' end of the viral RNA. RT uses the 3' end of the tRNA primer to perform a short round of RNA-dependent minus-strand DNA synthesis. The reading proceeds through the U5 region and ends after the repeated (R) region which is present at both ends of viral RNA. The portion of the RNA-DNA heteroduplex is digested by the RNase H, resulting in a ssDNA product attached to the tRNA primer. This ssDNA/tRNA hybridizes with the identical R region situated at the 3' end of viral RNA. This template exchange, known as minus-strand DNA strong stop transfer, can be either intra- or intermolecular. RT uses the 3' end of this newly synthesized short ssDNA to perform the RNA-dependent minus-strand DNA synthesis of the whole template. RNase H digests the RNA template except for a polypurine tract (PPT) situated at the 5' end of the genome. It is not clear if both polymerase and RNase H activities are simultaneous. RNase H probably can proceed both in a polymerase-dependent (RNA cut into small fragments by the same RT performing DNA synthesis) and a polymerase-independent mode (cleavage of remaining RNA fragments by free RTs). Secondly, RT performs DNA-directed plus-strand DNA synthesis using the PPT that has not been removed by RNase H as primers. PPT and tRNA primers are then removed by RNase H. The 3' and 5' ssDNA PBS regions hybridize to form a circular dsDNA intermediate. Strand displacement synthesis by RT to the PBS and PPT ends produces a blunt ended, linear dsDNA copy of the viral genome that includes long terminal repeats (LTRs) at both ends. In terms of biological role, catalyzes viral DNA integration into the host chromosome, by performing a series of DNA cutting and joining reactions. This enzyme activity takes place after virion entry into a cell and reverse transcription of the RNA genome in dsDNA. The first step in the integration process is 3' processing. This step requires a complex comprising the viral genome, matrix protein and integrase. This complex is called the pre-integration complex (PIC). The integrase protein removes 2 nucleotides from each 3' end of the viral DNA, leaving recessed CA OH's at the 3' ends. In the second step that requires cell division, the PIC enters cell nucleus. In the third step, termed strand transfer, the integrase protein joins the previously processed 3' ends to the 5' ends of strands of target cellular DNA at the site of integration. The last step is viral DNA integration into host chromosome. This is Gag-Pol polyprotein (gag-pol) from Homo sapiens (Human).